The following is a 689-amino-acid chain: Pyocin-S2 (689 aa).

Positions 656, 681, and 685 each coordinate Zn(2+).

This sequence belongs to the colicin/pyosin nuclease family. In terms of assembly, purified pyocin S2 makes up a complex of the two (large and small) proteins. The large protein, but not the pyocin complex, shows in vitro DNase activity.

Functionally, causes breakdown of chromosomal DNA as well as complete inhibition of lipid synthesis in sensitive cells. This Pseudomonas aeruginosa (strain ATCC 15692 / DSM 22644 / CIP 104116 / JCM 14847 / LMG 12228 / 1C / PRS 101 / PAO1) protein is Pyocin-S2 (pys2).